The primary structure comprises 117 residues: Hydrogenase maturation factor HypA (117 aa).

His-2 contacts Ni(2+). Zn(2+) is bound by residues Cys-73, Cys-76, Cys-89, and Cys-92.

This sequence belongs to the HypA/HybF family.

Involved in the maturation of [NiFe] hydrogenases. Required for nickel insertion into the metal center of the hydrogenase. This is Hydrogenase maturation factor HypA from Pelodictyon phaeoclathratiforme (strain DSM 5477 / BU-1).